Consider the following 286-residue polypeptide: Nucleotide-binding protein VC0395_A2112/VC395_2645 (286 aa).

8–15 is an ATP binding site; the sequence is GQSGAGKS. Residue 56–59 coordinates GTP; sequence DIRN.

It belongs to the RapZ-like family.

Displays ATPase and GTPase activities. The protein is Nucleotide-binding protein VC0395_A2112/VC395_2645 of Vibrio cholerae serotype O1 (strain ATCC 39541 / Classical Ogawa 395 / O395).